The sequence spans 125 residues: Ribosome-binding factor A (125 aa).

It belongs to the RbfA family. As to quaternary structure, monomer. Binds 30S ribosomal subunits, but not 50S ribosomal subunits or 70S ribosomes.

Its subcellular location is the cytoplasm. In terms of biological role, one of several proteins that assist in the late maturation steps of the functional core of the 30S ribosomal subunit. Associates with free 30S ribosomal subunits (but not with 30S subunits that are part of 70S ribosomes or polysomes). Required for efficient processing of 16S rRNA. May interact with the 5'-terminal helix region of 16S rRNA. This is Ribosome-binding factor A from Xylella fastidiosa (strain M12).